Consider the following 1151-residue polypeptide: Importin beta (1151 aa).

HEAT repeat units lie at residues 1 to 36 (MDLA…KQEE), 37 to 82 (PASY…GNGN), 83 to 132 (PECV…VAQF), 133 to 175 (PEFF…TKIG), 176 to 222 (GKAI…DSVI), 223 to 269 (PNSV…AVLK), 270 to 316 (PMVK…RAKK), 317 to 377 (AISE…KVIF), 378 to 416 (PLIK…LVTK), 417 to 453 (EDIV…EDYA), 454 to 495 (PTFQ…HLKK), 496 to 540 (AETY…LKND), 541 to 593 (FADM…AGTL), 594 to 642 (PQLF…PETF), 643 to 704 (PKYM…MRKT), 705 to 756 (PAAF…TVAS), 757 to 811 (PPAV…SYTE), 812 to 880 (TVNK…ALGD), 881 to 932 (LSLD…KYLS), 933 to 978 (PANS…YEGD), 979 to 1027 (PGLA…AQAF), 1028 to 1074 (PTEL…ARND), 1075 to 1120 (PNFM…VLTQ), and 1121 to 1151 (IAGH…SVRQ).

The protein belongs to the importin beta family.

The protein resides in the nucleus intermembrane space. Its subcellular location is the cytoplasm. It localises to the nucleus. Functionally, functions in nuclear protein import as nuclear transport receptor. Involved in encystation process. Constitutive expression enhances cyst production and increases transcription of endogenous genes involved in encystation. Level of mRNA of the transcriptional factor myb1-like protein increases in early stages of the encystation process followed by increased mRNAs of the cyst wall proteins cwp1-3. This is Importin beta from Giardia intestinalis (strain ATCC 50803 / WB clone C6) (Giardia lamblia).